Reading from the N-terminus, the 257-residue chain is Dihydroorotate dehydrogenase B (NAD(+)), electron transfer subunit (257 aa).

Positions 2–100 constitute an FAD-binding FR-type domain; sequence ILIEDLTVVS…MGPQGNGFDI (99 aa). Residues 51–54, 68–70, and 75–76 each bind FAD; these read RPIS, VYR, and GT. Residues Cys-220, Cys-225, Cys-228, and Cys-244 each contribute to the [2Fe-2S] cluster site.

It belongs to the PyrK family. As to quaternary structure, heterotetramer of 2 PyrK and 2 PyrD type B subunits. The cofactor is [2Fe-2S] cluster. FAD serves as cofactor.

Its pathway is pyrimidine metabolism; UMP biosynthesis via de novo pathway; orotate from (S)-dihydroorotate (NAD(+) route): step 1/1. Responsible for channeling the electrons from the oxidation of dihydroorotate from the FMN redox center in the PyrD type B subunit to the ultimate electron acceptor NAD(+). The protein is Dihydroorotate dehydrogenase B (NAD(+)), electron transfer subunit of Streptococcus thermophilus (strain ATCC BAA-491 / LMD-9).